A 390-amino-acid polypeptide reads, in one-letter code: Endonuclease 8-like 1 (390 aa).

Pro2 (schiff-base intermediate with DNA) is an active-site residue. Glu3 serves as the catalytic Proton donor. Lys54 acts as the Proton donor; for beta-elimination activity in catalysis. Asn176 provides a ligand contact to DNA. Positions 278 to 390 (TIWFQGDPGP…SLEPEGTSAS (113 aa)) are disordered. Residues 291–301 (KGRKSRKKKSK) are compositionally biased toward basic residues. A compositionally biased stretch (polar residues) spans 335-347 (TATQRPEGTSLQQ). DNA is bound at residue Arg339. Arg339 functions as the Proton donor; for delta-elimination activity in the catalytic mechanism.

Belongs to the FPG family. In terms of tissue distribution, ubiquitous.

It localises to the cytoplasm. The protein localises to the cytoskeleton. The protein resides in the microtubule organizing center. Its subcellular location is the centrosome. It is found in the nucleus. It localises to the chromosome. It catalyses the reaction 2'-deoxyribonucleotide-(2'-deoxyribose 5'-phosphate)-2'-deoxyribonucleotide-DNA = a 3'-end 2'-deoxyribonucleotide-(2,3-dehydro-2,3-deoxyribose 5'-phosphate)-DNA + a 5'-end 5'-phospho-2'-deoxyribonucleoside-DNA + H(+). In terms of biological role, involved in base excision repair of DNA damaged by oxidation or by mutagenic agents. Acts as a DNA glycosylase that recognizes and removes damaged bases. Has a preference for oxidized pyrimidines, such as thymine glycol, formamidopyrimidine (Fapy) and 5-hydroxyuracil. Has marginal activity towards 8-oxoguanine. Has AP (apurinic/apyrimidinic) lyase activity and introduces nicks in the DNA strand. Cleaves the DNA backbone by beta-delta elimination to generate a single-strand break at the site of the removed base with both 3'- and 5'-phosphates. Has DNA glycosylase/lyase activity towards mismatched uracil and thymine, in particular in U:C and T:C mismatches. Specifically binds 5-hydroxymethylcytosine (5hmC), suggesting that it acts as a specific reader of 5hmC. This Homo sapiens (Human) protein is Endonuclease 8-like 1 (NEIL1).